The primary structure comprises 414 residues: Cyclin-B1-3 (414 aa).

It belongs to the cyclin family. Cyclin AB subfamily. In terms of tissue distribution, expressed in roots, stems and flowers.

This is Cyclin-B1-3 (CYCB1-3) from Arabidopsis thaliana (Mouse-ear cress).